A 250-amino-acid chain; its full sequence is MNPIAFHVGNLAIRWYGVIISIGAALGLLLAMYNCKIREASYDEFINMFLIAFPSAIIGARLYYVIFEFEDYRDNLINIFNTRQGGLAIHGGIIFGVLAVYIYLKYRKESFFEYVDVAAPSIILGQAIGRWGNFFNSEAHGGPVTKEFISKFPQFIQKGMFIEGTYYHPTFLYESIWNFIVCIFLVYLLKKTKKKGIVFMAYIGLYSLGRFFIEGLRTDSLYLGSIRVAQLISVLGIILSIFFIYNIIKN.

Helical transmembrane passes span 11–31 (LAIR…LLLA), 49–69 (FLIA…IFEF), 84–104 (QGGL…YIYL), and 109–129 (ESFF…QAIG). Residue arginine 130 participates in a 1,2-diacyl-sn-glycero-3-phospho-(1'-sn-glycerol) binding. Helical transmembrane passes span 169-189 (PTFL…VYLL), 196-216 (GIVF…IEGL), and 228-248 (VAQL…YNII).

This sequence belongs to the Lgt family.

It localises to the cell membrane. It catalyses the reaction L-cysteinyl-[prolipoprotein] + a 1,2-diacyl-sn-glycero-3-phospho-(1'-sn-glycerol) = an S-1,2-diacyl-sn-glyceryl-L-cysteinyl-[prolipoprotein] + sn-glycerol 1-phosphate + H(+). It functions in the pathway protein modification; lipoprotein biosynthesis (diacylglyceryl transfer). In terms of biological role, catalyzes the transfer of the diacylglyceryl group from phosphatidylglycerol to the sulfhydryl group of the N-terminal cysteine of a prolipoprotein, the first step in the formation of mature lipoproteins. The protein is Phosphatidylglycerol--prolipoprotein diacylglyceryl transferase of Clostridium botulinum (strain 657 / Type Ba4).